The primary structure comprises 353 residues: Holliday junction branch migration complex subunit RuvB (353 aa).

Residues Met-1–Tyr-182 form a large ATPase domain (RuvB-L) region. ATP is bound by residues Ile-21, Arg-22, Gly-63, Lys-66, Thr-67, Thr-68, Glu-129–Phe-131, Arg-172, Tyr-182, and Arg-219. Thr-67 is a binding site for Mg(2+). Residues Asn-183–Asp-253 are small ATPAse domain (RuvB-S). The head domain (RuvB-H) stretch occupies residues Val-256–Leu-353. Residues Arg-292, Arg-311, and Arg-316 each coordinate DNA.

This sequence belongs to the RuvB family. Homohexamer. Forms an RuvA(8)-RuvB(12)-Holliday junction (HJ) complex. HJ DNA is sandwiched between 2 RuvA tetramers; dsDNA enters through RuvA and exits via RuvB. An RuvB hexamer assembles on each DNA strand where it exits the tetramer. Each RuvB hexamer is contacted by two RuvA subunits (via domain III) on 2 adjacent RuvB subunits; this complex drives branch migration. In the full resolvosome a probable DNA-RuvA(4)-RuvB(12)-RuvC(2) complex forms which resolves the HJ.

The protein resides in the cytoplasm. The enzyme catalyses ATP + H2O = ADP + phosphate + H(+). Its function is as follows. The RuvA-RuvB-RuvC complex processes Holliday junction (HJ) DNA during genetic recombination and DNA repair, while the RuvA-RuvB complex plays an important role in the rescue of blocked DNA replication forks via replication fork reversal (RFR). RuvA specifically binds to HJ cruciform DNA, conferring on it an open structure. The RuvB hexamer acts as an ATP-dependent pump, pulling dsDNA into and through the RuvAB complex. RuvB forms 2 homohexamers on either side of HJ DNA bound by 1 or 2 RuvA tetramers; 4 subunits per hexamer contact DNA at a time. Coordinated motions by a converter formed by DNA-disengaged RuvB subunits stimulates ATP hydrolysis and nucleotide exchange. Immobilization of the converter enables RuvB to convert the ATP-contained energy into a lever motion, pulling 2 nucleotides of DNA out of the RuvA tetramer per ATP hydrolyzed, thus driving DNA branch migration. The RuvB motors rotate together with the DNA substrate, which together with the progressing nucleotide cycle form the mechanistic basis for DNA recombination by continuous HJ branch migration. Branch migration allows RuvC to scan DNA until it finds its consensus sequence, where it cleaves and resolves cruciform DNA. The sequence is that of Holliday junction branch migration complex subunit RuvB from Thioalkalivibrio sulfidiphilus (strain HL-EbGR7).